A 171-amino-acid chain; its full sequence is Large ribosomal subunit protein uL10 (171 aa).

The protein belongs to the universal ribosomal protein uL10 family. As to quaternary structure, part of the ribosomal stalk of the 50S ribosomal subunit. The N-terminus interacts with L11 and the large rRNA to form the base of the stalk. The C-terminus forms an elongated spine to which L12 dimers bind in a sequential fashion forming a multimeric L10(L12)X complex.

Its function is as follows. Forms part of the ribosomal stalk, playing a central role in the interaction of the ribosome with GTP-bound translation factors. The polypeptide is Large ribosomal subunit protein uL10 (Paracoccus denitrificans (strain Pd 1222)).